The sequence spans 320 residues: uncharacterized protein (320 aa).

Arginine 61 carries the omega-N-methylarginine modification. The segment at 299–320 (LHLQHQKQTSKDAGRQTPERKA) is disordered. The segment covering 307 to 320 (TSKDAGRQTPERKA) has biased composition (basic and acidic residues). At threonine 315 the chain carries Phosphothreonine.

This is an uncharacterized protein from Mus musculus (Mouse).